We begin with the raw amino-acid sequence, 998 residues long: UPF0182 protein AAur_2732 (998 aa).

The next 7 membrane-spanning stretches (helical) occupy residues 18–38 (GALTPTLIVVAVAVVGFIFFA), 64–84 (IITFLIGFAMMFAAVFFAIRI), 115–135 (VVMIGLPILFGLFAGSAAASQ), 168–188 (FLGFITGFLISIAVVAGIAGI), 211–231 (QIHIAVTGALFLILLGVNFWL), 260–280 (AILAVAAGLVAILFIIAAIIG), and 287–307 (IGTAMLVITAILAGGVYPWVI). Disordered regions lie at residues 490–518 (GAPDGAPNREQDRPAGREGGGETQYTFSG), 888–923 (LFGGDSGATAGDSDNNGQTPTSPPGTTPPPAGPTDA), and 971–998 (QARLDATPAPTATPGATPSATPSPSPSS). Over residues 496–509 (PNREQDRPAGREGG) the composition is skewed to basic and acidic residues. Positions 908–919 (TSPPGTTPPPAG) are enriched in pro residues. Residues 976–990 (ATPAPTATPGATPSA) are compositionally biased toward low complexity.

It belongs to the UPF0182 family.

It localises to the cell membrane. The polypeptide is UPF0182 protein AAur_2732 (Paenarthrobacter aurescens (strain TC1)).